Reading from the N-terminus, the 939-residue chain is UvrABC system protein A (939 aa).

Residue 32-39 (GLSGSGKS) participates in ATP binding. The C4-type zinc-finger motif lies at 252–279 (CADCGISIDELAPRMFSFNSPFGKCERC). 2 ABC transporter domains span residues 309–588 (WGDS…ENSL) and 608–936 (GNGN…KYLK). Residue 640–647 (GVSGSGKS) participates in ATP binding. A C4-type zinc finger spans residues 739-765 (CEACSGDGIIKIEMQFLSDVYVPCEVC).

This sequence belongs to the ABC transporter superfamily. UvrA family. As to quaternary structure, forms a heterotetramer with UvrB during the search for lesions.

It localises to the cytoplasm. Its function is as follows. The UvrABC repair system catalyzes the recognition and processing of DNA lesions. UvrA is an ATPase and a DNA-binding protein. A damage recognition complex composed of 2 UvrA and 2 UvrB subunits scans DNA for abnormalities. When the presence of a lesion has been verified by UvrB, the UvrA molecules dissociate. This is UvrABC system protein A from Clostridium perfringens (strain 13 / Type A).